Reading from the N-terminus, the 854-residue chain is DNA gyrase subunit A (854 aa).

The Topo IIA-type catalytic domain occupies 42 to 510 (LPEVRDGLKP…ADGQVSDEDL (469 aa)). Tyr129 (O-(5'-phospho-DNA)-tyrosine intermediate) is an active-site residue. The GyrA-box signature appears at 537–543 (QKRGGKG).

The protein belongs to the type II topoisomerase GyrA/ParC subunit family. Heterotetramer, composed of two GyrA and two GyrB chains. In the heterotetramer, GyrA contains the active site tyrosine that forms a transient covalent intermediate with DNA, while GyrB binds cofactors and catalyzes ATP hydrolysis.

Its subcellular location is the cytoplasm. It carries out the reaction ATP-dependent breakage, passage and rejoining of double-stranded DNA.. Its activity is regulated as follows. DNA supercoiling is inhibited by the coumarin antibiotic novobiocin. Also inhibited by the fluoroquinolones ciprofloxacin and moxifloxacin. A type II topoisomerase that negatively supercoils closed circular double-stranded (ds) DNA in an ATP-dependent manner to modulate DNA topology and maintain chromosomes in an underwound state; also catalyzes the interconversion of other topological isomers of double-stranded DNA rings, including catenanes. At comparable concentrations has a stronger decatenation activity than E.coli, which is inhibited by ciprofloxacin and novobiocin. Cleaves dsDNA at the sequence 5'-AT/GGCC-3', leaving a 4 base overhang. Relaxes negatively supercoiled DNA in an ATP-independent manner. In terms of biological role, negative supercoiling favors strand separation, and DNA replication, transcription, recombination and repair, all of which involve strand separation. Type II topoisomerases break and join 2 DNA strands simultaneously in an ATP-dependent manner. The protein is DNA gyrase subunit A of Mycolicibacterium smegmatis (Mycobacterium smegmatis).